The chain runs to 366 residues: Methyltransferase calH (366 aa).

S-adenosyl-L-methionine-binding positions include threonine 189, aspartate 216, and 245-246 (NA).

It belongs to the class I-like SAM-binding methyltransferase superfamily.

Its pathway is secondary metabolite biosynthesis. Functionally, methyltransferase; part of the gene cluster that mediates the biosynthesis of calbistrin A and related compounds. Calbistrin A is a secondary metabolite with an interesting structure that was recently found to have bioactivity against leukemia cells. It consists of two polyketides linked by an ester bond: a bicyclic decalin containing polyketide and a linear 12 carbon dioic acid structure. The polyketide synthase calA is probably responsible for forming the decalin moiety. Because calA lacks a designated enoylreductase (ER) domain, the required activity is provided by the trans-enoyl reductase calK. Following release from the PKS, calF then probably catalyzes the oxidation and the subsequent Diels Alder cycloisomerization that lead to the formation of the decalin moiety. The decalin polyketide backbone includes two C-methyl groups, at C7 and C11 in backbone, of which the C7 position is probably methylated by the methyltransferase domain of calA. A candidate for adding the methyl group at C11, if not done by CalA, is the cluster methyltransferase calH. Several additional tailoring enzymes within the cluster could be involved in the modification of the decalin polyketide product. Those include the 3 cytochrome P450 monooxygenases CalE, CalG and CalL, of which one might be responsible for the introduction of the extra hydroxyl group attached to the backbone of the decalin moiety, at position C9 in the backbone, that allows for attachment of the linear moiety. One tailoring enzyme activity that is expected to be involved in biosynthesis of calbistrin is an acyltransferase for connecting the two polyketide synthase products, and which could be performed by the cluster acyltransferase calJ. The enzyme responsible for the biosynthesis of the linear moiety, probably a second PKS, has not been identified yet. The polypeptide is Methyltransferase calH (Penicillium decumbens).